A 158-amino-acid polypeptide reads, in one-letter code: Snaclec coagulation factor X-activating enzyme light chain 2 (158 aa).

The first 23 residues, 1 to 23 (MGRSISVSFGLLAVFLSLSGTGA), serve as a signal peptide directing secretion. Disulfide bonds link Cys-27–Cys-38, Cys-55–Cys-152, and Cys-127–Cys-144. The C-type lectin domain occupies 34-153 (YRYFCYRVFK…CEEPYPFVCK (120 aa)).

The protein belongs to the snaclec family. In terms of assembly, heterotrimer; disulfide-linked. The heterotrimer consists of 1 heavy chain (a metalloproteinase) and 2 light chains: LC1 and LC2. Expressed by the venom gland.

The protein resides in the secreted. Its function is as follows. Regulatory subunit of the blood coagulation factor X-activating enzyme. Activates coagulation factor X (F10) by cleaving the Arg-Ile bond at position 234, activates coagulation factor IX (F9) by cleaving the Arg-Val bond at position 226 and is also able to activate protein C (PROC). May serve as an exosite by which the enzyme recognizes and binds to the Gla domain of factor X (F10) in a calcium-dependent manner. The sequence is that of Snaclec coagulation factor X-activating enzyme light chain 2 (LC2) from Macrovipera lebetinus (Levantine viper).